The following is a 415-amino-acid chain: Histidine--tRNA ligase (415 aa).

This sequence belongs to the class-II aminoacyl-tRNA synthetase family. As to quaternary structure, homodimer.

It is found in the cytoplasm. It catalyses the reaction tRNA(His) + L-histidine + ATP = L-histidyl-tRNA(His) + AMP + diphosphate + H(+). The polypeptide is Histidine--tRNA ligase (Clostridium perfringens (strain ATCC 13124 / DSM 756 / JCM 1290 / NCIMB 6125 / NCTC 8237 / Type A)).